Consider the following 277-residue polypeptide: Large ribosomal subunit protein uL2 (277 aa).

Residues 219-277 (TVRGSVMNPNDHPHGGGEGKAPVGRKAPSTPWGKPALGLKTRNKKAKSDKLIVRRRNEK) form a disordered region. A compositionally biased stretch (basic and acidic residues) spans 264 to 277 (AKSDKLIVRRRNEK).

This sequence belongs to the universal ribosomal protein uL2 family. Part of the 50S ribosomal subunit. Forms a bridge to the 30S subunit in the 70S ribosome.

Functionally, one of the primary rRNA binding proteins. Required for association of the 30S and 50S subunits to form the 70S ribosome, for tRNA binding and peptide bond formation. It has been suggested to have peptidyltransferase activity; this is somewhat controversial. Makes several contacts with the 16S rRNA in the 70S ribosome. This is Large ribosomal subunit protein uL2 from Streptococcus gordonii (strain Challis / ATCC 35105 / BCRC 15272 / CH1 / DL1 / V288).